The chain runs to 235 residues: Cobalt transport protein CbiM (235 aa).

An N-terminal signal peptide occupies residues 1–33; the sequence is MRYLKFFLLLVFLVPSFGFSMHIMEGFLPPTHA. The next 6 membrane-spanning stretches (helical) occupy residues 34-51, 63-83, 95-115, 118-138, 156-176, and 199-219; these read LIWYILSLPFFVIGLFTI, MLLAFVGAFTFVLSAMKIPSV, LGAIIFGPFTMTVIGTIVLLF, LLLAHGGLTTLGANTFSMAIV, NIAVFLAAFLGDLFTYVTTSF, and IFAITQVPLAIIEGLVTVVVI.

This sequence belongs to the CbiM family. Forms an energy-coupling factor (ECF) transporter complex composed of an ATP-binding protein (A component, CbiO), a transmembrane protein (T component, CbiQ) and 2 possible substrate-capture proteins (S components, CbiM and CbiN) of unknown stoichimetry.

It is found in the cell inner membrane. It participates in cofactor biosynthesis; adenosylcobalamin biosynthesis. Part of the energy-coupling factor (ECF) transporter complex CbiMNOQ involved in cobalt import. The protein is Cobalt transport protein CbiM of Thermosipho melanesiensis (strain DSM 12029 / CIP 104789 / BI429).